We begin with the raw amino-acid sequence, 247 residues long: Ribonuclease 3 (247 aa).

One can recognise an RNase III domain in the interval 21–149 (LQKLSKKIGI…LVGAIYLDQG (129 aa)). Glu-62 contributes to the Mg(2+) binding site. Residue Asp-66 is part of the active site. Residues Asn-135 and Glu-138 each contribute to the Mg(2+) site. The active site involves Glu-138. Residues 176–245 (DYKTQLQEYS…AKELYNRIRK (70 aa)) form the DRBM domain.

This sequence belongs to the ribonuclease III family. In terms of assembly, homodimer. The cofactor is Mg(2+).

It localises to the cytoplasm. It catalyses the reaction Endonucleolytic cleavage to 5'-phosphomonoester.. Functionally, digests double-stranded RNA. Involved in the processing of primary rRNA transcript to yield the immediate precursors to the large and small rRNAs (23S and 16S). Processes some mRNAs, and tRNAs when they are encoded in the rRNA operon. Processes pre-crRNA and tracrRNA of type II CRISPR loci if present in the organism. The sequence is that of Ribonuclease 3 from Leptospira interrogans serogroup Icterohaemorrhagiae serovar copenhageni (strain Fiocruz L1-130).